We begin with the raw amino-acid sequence, 313 residues long: ADP-L-glycero-D-manno-heptose-6-epimerase (313 aa).

Residues 10–11, 31–32, Lys38, Arg53, 75–79, and Asn92 contribute to the NADP(+) site; these read MI, DN, and EGACS. Tyr139 (proton acceptor) is an active-site residue. Lys143 serves as a coordination point for NADP(+). A substrate-binding site is contributed by Asn174. NADP(+)-binding residues include Val175 and Lys183. Lys183 serves as the catalytic Proton acceptor. Residues Ser185, His192, 206–209, Arg214, and Tyr277 contribute to the substrate site; that span reads FAGS.

The protein belongs to the NAD(P)-dependent epimerase/dehydratase family. HldD subfamily. As to quaternary structure, homopentamer. The cofactor is NADP(+).

It catalyses the reaction ADP-D-glycero-beta-D-manno-heptose = ADP-L-glycero-beta-D-manno-heptose. It participates in nucleotide-sugar biosynthesis; ADP-L-glycero-beta-D-manno-heptose biosynthesis; ADP-L-glycero-beta-D-manno-heptose from D-glycero-beta-D-manno-heptose 7-phosphate: step 4/4. Catalyzes the interconversion between ADP-D-glycero-beta-D-manno-heptose and ADP-L-glycero-beta-D-manno-heptose via an epimerization at carbon 6 of the heptose. The chain is ADP-L-glycero-D-manno-heptose-6-epimerase from Vibrio campbellii (strain ATCC BAA-1116).